We begin with the raw amino-acid sequence, 245 residues long: Ureidoacrylate amidohydrolase RutB (245 aa).

The active-site Proton acceptor is Asp-38. Lys-147 is a catalytic residue. Cys-180 acts as the Nucleophile in catalysis.

Belongs to the isochorismatase family. RutB subfamily.

It carries out the reaction (Z)-3-ureidoacrylate + H2O + H(+) = (Z)-3-aminoacrylate + NH4(+) + CO2. It catalyses the reaction (Z)-3-ureidoacrylate + H2O = (Z)-3-aminoacrylate + carbamate + H(+). The catalysed reaction is (Z)-2-methylureidoacrylate + H2O + H(+) = (Z)-2-methylaminoacrylate + NH4(+) + CO2. Hydrolyzes ureidoacrylate to form aminoacrylate and carbamate. The carbamate hydrolyzes spontaneously, thereby releasing one of the nitrogen atoms of the pyrimidine ring as ammonia and one of its carbon atoms as CO2. This Acinetobacter baylyi (strain ATCC 33305 / BD413 / ADP1) protein is Ureidoacrylate amidohydrolase RutB.